Consider the following 354-residue polypeptide: Replication factor C subunit 3 (354 aa).

An ATP-binding site is contributed by Gly-41–Lys-48.

The protein belongs to the activator 1 small subunits family. As to quaternary structure, heterotetramer of subunits RFC2, RFC3, RFC4 and RFC5 that can form a complex with RFC1.

It is found in the nucleus. In terms of biological role, may be involved in DNA replication and thus regulate cell proliferation. In Arabidopsis thaliana (Mouse-ear cress), this protein is Replication factor C subunit 3 (RFC3).